The chain runs to 166 residues: Prorelaxin H1 (166 aa).

Positions 1 to 5 are cleaved as a signal peptide; that stretch reads SRAVA. 3 cysteine pairs are disulfide-bonded: Cys16–Cys153, Cys28–Cys166, and Cys152–Cys157. Residues 37–139 constitute a propeptide, connecting peptide; that stretch reads SLSQEDAPQT…KYLGLDTHSQ (103 aa).

This sequence belongs to the insulin family. Heterodimer of a B chain and an A chain linked by two disulfide bonds. Expressed in the corpus luteum of pregnancy but not in the placenta.

It is found in the secreted. Functionally, relaxin is an ovarian hormone that acts with estrogen to produce dilatation of the birth canal in many mammals. May be involved in remodeling of connective tissues during pregnancy, promoting growth of pubic ligaments and ripening of the cervix. The chain is Prorelaxin H1 (RNL1) from Pan troglodytes (Chimpanzee).